Here is a 507-residue protein sequence, read N- to C-terminus: ATP synthase subunit alpha, chloroplastic (507 aa).

Position 170–177 (170–177 (GDRQTGKT)) interacts with ATP.

The protein belongs to the ATPase alpha/beta chains family. F-type ATPases have 2 components, CF(1) - the catalytic core - and CF(0) - the membrane proton channel. CF(1) has five subunits: alpha(3), beta(3), gamma(1), delta(1), epsilon(1). CF(0) has four main subunits: a, b, b' and c.

Its subcellular location is the plastid. It localises to the chloroplast thylakoid membrane. The enzyme catalyses ATP + H2O + 4 H(+)(in) = ADP + phosphate + 5 H(+)(out). Produces ATP from ADP in the presence of a proton gradient across the membrane. The alpha chain is a regulatory subunit. The polypeptide is ATP synthase subunit alpha, chloroplastic (Pelargonium hortorum (Common geranium)).